A 429-amino-acid chain; its full sequence is GDP-fucose protein O-fucosyltransferase 2 (429 aa).

The signal sequence occupies residues 1 to 21; the sequence is MATLSFVFLLLGAVSWPPASA. 53 to 57 lines the GDP-beta-L-fucose pocket; the sequence is PEGFN. E54 acts as the Proton acceptor in catalysis. C161 and C192 form a disulfide bridge. N-linked (GlcNAc...) asparagine glycosylation is found at N189, N209, and N259. Residues 292 to 294, D371, and 388 to 389 each bind GDP-beta-L-fucose; these read HLR and TF. A disulfide bond links C412 and C419.

Belongs to the glycosyltransferase 68 family.

It localises to the endoplasmic reticulum. Its subcellular location is the golgi apparatus. It carries out the reaction L-seryl-[protein] + GDP-beta-L-fucose = 3-O-(alpha-L-fucosyl)-L-seryl-[protein] + GDP + H(+). The catalysed reaction is L-threonyl-[protein] + GDP-beta-L-fucose = 3-O-(alpha-L-fucosyl)-L-threonyl-[protein] + GDP + H(+). The protein operates within protein modification; protein glycosylation. In terms of biological role, catalyzes the reaction that attaches fucose through an O-glycosidic linkage to a conserved serine or threonine residue in the consensus sequence C1-X-X-S/T-C2 of thrombospondin type I repeats (TSRs) where C1 and C2 are the first and second cysteines of the repeat, respectively. O-fucosylates members of several protein families including the ADAMTS, the thrombospondin (TSP) and spondin families. Required for the proper secretion of ADAMTS family members such as ADAMTSL1 and ADAMTS13. The O-fucosylation of TSRs is also required for restricting epithelial to mesenchymal transition (EMT), maintaining the correct patterning of mesoderm and localization of the definite endoderm. The polypeptide is GDP-fucose protein O-fucosyltransferase 2 (POFUT2) (Pan troglodytes (Chimpanzee)).